The primary structure comprises 116 residues: Large ribosomal subunit protein bL19 (116 aa).

It belongs to the bacterial ribosomal protein bL19 family.

Its function is as follows. This protein is located at the 30S-50S ribosomal subunit interface and may play a role in the structure and function of the aminoacyl-tRNA binding site. The polypeptide is Large ribosomal subunit protein bL19 (Stutzerimonas stutzeri (strain A1501) (Pseudomonas stutzeri)).